The following is a 329-amino-acid chain: Fructose-1,6-bisphosphatase class 1 (329 aa).

Residues E84, D103, L105, and D106 each contribute to the Mg(2+) site. Substrate-binding positions include 106–109 (DGSS), N196, and K262. Residue E268 coordinates Mg(2+).

It belongs to the FBPase class 1 family. As to quaternary structure, homotetramer. It depends on Mg(2+) as a cofactor.

It localises to the cytoplasm. The enzyme catalyses beta-D-fructose 1,6-bisphosphate + H2O = beta-D-fructose 6-phosphate + phosphate. It participates in carbohydrate biosynthesis; gluconeogenesis. This is Fructose-1,6-bisphosphatase class 1 from Shewanella loihica (strain ATCC BAA-1088 / PV-4).